The primary structure comprises 191 residues: Aminodeoxychorismate synthase component 2 (191 aa).

The Glutamine amidotransferase type-1 domain occupies 1–191; it reads MLLLIDNYDS…HQLLDNFLNR (191 aa). Active-site residues include Cys-79, His-172, and Glu-174.

Monomer. Heterodimer consisting of two non-identical subunits: a glutamine amidotransferase subunit (PabA) and a aminodeoxychorismate synthase subunit (PabB).

The enzyme catalyses chorismate + L-glutamine = 4-amino-4-deoxychorismate + L-glutamate. The protein operates within cofactor biosynthesis; tetrahydrofolate biosynthesis; 4-aminobenzoate from chorismate: step 1/2. In terms of biological role, part of a heterodimeric complex that catalyzes the two-step biosynthesis of 4-amino-4-deoxychorismate (ADC), a precursor of p-aminobenzoate (PABA) and tetrahydrofolate. In the first step, a glutamine amidotransferase (PabA) generates ammonia as a substrate that, along with chorismate, is used in the second step, catalyzed by aminodeoxychorismate synthase (PabB) to produce ADC. PabA converts glutamine into glutamate only in the presence of stoichiometric amounts of PabB. The chain is Aminodeoxychorismate synthase component 2 (pabA) from Serratia marcescens.